A 518-amino-acid chain; its full sequence is ATP synthase subunit beta 2 (518 aa).

154–161 (GGAGVGKT) contacts ATP. The disordered stretch occupies residues 455 to 518 (IDEAKGKAKP…TDHAADTHES (64 aa)). Basic and acidic residues-rich tracts occupy residues 473 to 485 (PDSK…DPKP) and 507 to 518 (PETDHAADTHES).

Belongs to the ATPase alpha/beta chains family. In terms of assembly, F-type ATPases have 2 components, CF(1) - the catalytic core - and CF(0) - the membrane proton channel. CF(1) has five subunits: alpha(3), beta(3), gamma(1), delta(1), epsilon(1). CF(0) has three main subunits: a(1), b(2) and c(9-12). The alpha and beta chains form an alternating ring which encloses part of the gamma chain. CF(1) is attached to CF(0) by a central stalk formed by the gamma and epsilon chains, while a peripheral stalk is formed by the delta and b chains.

Its subcellular location is the cell inner membrane. The catalysed reaction is ATP + H2O + 4 H(+)(in) = ADP + phosphate + 5 H(+)(out). Produces ATP from ADP in the presence of a proton gradient across the membrane. The catalytic sites are hosted primarily by the beta subunits. The polypeptide is ATP synthase subunit beta 2 (Albidiferax ferrireducens (strain ATCC BAA-621 / DSM 15236 / T118) (Rhodoferax ferrireducens)).